Here is a 302-residue protein sequence, read N- to C-terminus: Protein NEOXANTHIN-DEFICIENT 1 (302 aa).

In terms of biological role, required for neoxanthin biosynthesis. Probably not involved directly in the enzymatic conversion of violaxanthin to neoxanthin. Is necessary but not sufficient for neoxanthin synthesis. This is Protein NEOXANTHIN-DEFICIENT 1 from Oryza sativa subsp. japonica (Rice).